We begin with the raw amino-acid sequence, 394 residues long: Ribulose bisphosphate carboxylase large chain (394 aa).

Lys5 carries the post-translational modification N6,N6,N6-trimethyllysine. Substrate is bound by residues Asn114 and Thr164. Lys166 (proton acceptor) is an active-site residue. Position 168 (Lys168) interacts with substrate. Mg(2+)-binding residues include Lys192, Asp194, and Glu195. At Lys192 the chain carries N6-carboxylysine. Catalysis depends on His285, which acts as the Proton acceptor. Residues Arg286, His318, and Ser370 each contribute to the substrate site.

It belongs to the RuBisCO large chain family. Type I subfamily. In terms of assembly, heterohexadecamer of 8 large chains and 8 small chains. It depends on Mg(2+) as a cofactor.

Its subcellular location is the plastid. The protein localises to the chloroplast. It catalyses the reaction 2 (2R)-3-phosphoglycerate + 2 H(+) = D-ribulose 1,5-bisphosphate + CO2 + H2O. It carries out the reaction D-ribulose 1,5-bisphosphate + O2 = 2-phosphoglycolate + (2R)-3-phosphoglycerate + 2 H(+). Its function is as follows. RuBisCO catalyzes two reactions: the carboxylation of D-ribulose 1,5-bisphosphate, the primary event in carbon dioxide fixation, as well as the oxidative fragmentation of the pentose substrate in the photorespiration process. Both reactions occur simultaneously and in competition at the same active site. In Cabomba caroliniana (Carolina fanwort), this protein is Ribulose bisphosphate carboxylase large chain (rbcL).